Reading from the N-terminus, the 162-residue chain is Neuritin-like protein (162 aa).

The N-terminal stretch at 1-32 is a signal peptide; sequence MMCNCCHCHWRRRCQRLPCALTLLLLLPLAVA. Alanine 136 carries GPI-anchor amidated alanine lipidation. The propeptide at 137-162 is removed in mature form; sequence PALAPAPAPVLLAAALALACLLGPLA.

It belongs to the neuritin family.

It is found in the cell membrane. This Mus musculus (Mouse) protein is Neuritin-like protein (Nrn1l).